Here is a 352-residue protein sequence, read N- to C-terminus: Photosystem II D2 protein (352 aa).

Thr-2 bears the N-acetylthreonine mark. Thr-2 carries the phosphothreonine modification. Residues 40–60 form a helical membrane-spanning segment; sequence CAYFALGGWLTGTTFVTSWYT. His-117 provides a ligand contact to chlorophyll a. A helical membrane pass occupies residues 124 to 140; the sequence is GFMLRQFEIARSVNLRP. Pheophytin a-binding residues include Gln-129 and Asn-142. Residues 152–165 form a helical membrane-spanning segment; sequence VFVSVFLIYPLGQS. His-197 contributes to the chlorophyll a binding site. A helical membrane pass occupies residues 207-227; it reads AALLCAIHGATVENTLFEDGD. Residues His-214 and Phe-261 each contribute to the a plastoquinone site. His-214 is a binding site for Fe cation. Position 268 (His-268) interacts with Fe cation. Residues 278 to 294 traverse the membrane as a helical segment; that stretch reads GLWMSAIGVVGLALNLR.

The protein belongs to the reaction center PufL/M/PsbA/D family. As to quaternary structure, PSII is composed of 1 copy each of membrane proteins PsbA, PsbB, PsbC, PsbD, PsbE, PsbF, PsbH, PsbI, PsbJ, PsbK, PsbL, PsbM, PsbT, PsbX, PsbY, PsbZ, Psb30/Ycf12, at least 3 peripheral proteins of the oxygen-evolving complex and a large number of cofactors. It forms dimeric complexes. Requires The D1/D2 heterodimer binds P680, chlorophylls that are the primary electron donor of PSII, and subsequent electron acceptors. It shares a non-heme iron and each subunit binds pheophytin, quinone, additional chlorophylls, carotenoids and lipids. There is also a Cl(-1) ion associated with D1 and D2, which is required for oxygen evolution. The PSII complex binds additional chlorophylls, carotenoids and specific lipids. as cofactor. Phosphorylated in vitro.

Its subcellular location is the plastid. The protein localises to the chloroplast thylakoid membrane. The catalysed reaction is 2 a plastoquinone + 4 hnu + 2 H2O = 2 a plastoquinol + O2. In terms of biological role, photosystem II (PSII) is a light-driven water:plastoquinone oxidoreductase that uses light energy to abstract electrons from H(2)O, generating O(2) and a proton gradient subsequently used for ATP formation. It consists of a core antenna complex that captures photons, and an electron transfer chain that converts photonic excitation into a charge separation. The D1/D2 (PsbA/PsbD) reaction center heterodimer binds P680, the primary electron donor of PSII as well as several subsequent electron acceptors. D2 is needed for assembly of a stable PSII complex. This Chlamydomonas reinhardtii (Chlamydomonas smithii) protein is Photosystem II D2 protein.